Reading from the N-terminus, the 548-residue chain is MDSQRNLFLIAFLFVSFMIWQAWQTDNAPQPLQTQTTQNTTSAAGDAVNQGVPASGQGKTITVKTDVLSLNINTRGGDIDQAQLLTYPDKLGSDQPFLLLESTPGFLYQAQSGLTGRNGPDNPANGARPLYTSGQDHFELANGQGELRIPLTFTAENGVTYTKTFVLKRGEYAIGVDYQINNTTQQPLEVSMFGQLKQTIDLPKHRDTGSSNFALHTFRGAAYSSSETNYEKYKFDTIRDNENLSTTTNNGWVAMLQQYFATAWVPQTAGSNTLYTSNLGNGVAAIGYKSAPVIVAAGSQQQLAATLWVGPEIQDKMAAVAPHLDLTVDYGWLWFISQPLFKLLKFLHGFIGNWGFSIIVITFIVRGIMYPLTKAQYTSMAKMRMLQPKIQAMRERLGDDKQRMSQEMMALYKAEKVNPLGGCLPLVIQMPIFLALYYMLMGSVELRHAPFALWIHDLAAQDPYYILPILMGVTMFFIQKMSPTTVTDPMQQKIMTFMPVIFTVFFLWFPSGLVLYYIVSNLVTILQQQLIYRGLEKRGLHSRDKKKA.

A helical membrane pass occupies residues 6–26; sequence NLFLIAFLFVSFMIWQAWQTD. Positions 30 to 53 are disordered; that stretch reads QPLQTQTTQNTTSAAGDAVNQGVP. Helical transmembrane passes span 345–365, 420–440, 458–478, and 499–519; these read KFLHGFIGNWGFSIIVITFIV, LGGCLPLVIQMPIFLALYYML, LAAQDPYYILPILMGVTMFFI, and PVIFTVFFLWFPSGLVLYYIV.

This sequence belongs to the OXA1/ALB3/YidC family. Type 1 subfamily. Interacts with the Sec translocase complex via SecD. Specifically interacts with transmembrane segments of nascent integral membrane proteins during membrane integration.

It localises to the cell inner membrane. Its function is as follows. Required for the insertion and/or proper folding and/or complex formation of integral membrane proteins into the membrane. Involved in integration of membrane proteins that insert both dependently and independently of the Sec translocase complex, as well as at least some lipoproteins. Aids folding of multispanning membrane proteins. This Erwinia tasmaniensis (strain DSM 17950 / CFBP 7177 / CIP 109463 / NCPPB 4357 / Et1/99) protein is Membrane protein insertase YidC.